Here is an 83-residue protein sequence, read N- to C-terminus: Small ribosomal subunit protein uS17 (83 aa).

It belongs to the universal ribosomal protein uS17 family. In terms of assembly, part of the 30S ribosomal subunit.

In terms of biological role, one of the primary rRNA binding proteins, it binds specifically to the 5'-end of 16S ribosomal RNA. This Francisella tularensis subsp. holarctica (strain FTNF002-00 / FTA) protein is Small ribosomal subunit protein uS17.